The chain runs to 410 residues: Succinyl-CoA:(R)-benzylsuccinate CoA-transferase subunit BbsE (410 aa).

It belongs to the CoA-transferase III family. In terms of assembly, heterotetramer composed of 2 BbsE subunits and 2 BbsF subunits.

The enzyme catalyses (R)-2-benzylsuccinate + succinyl-CoA = (R)-2-benzylsuccinyl-CoA + succinate. Its pathway is xenobiotic degradation; toluene degradation. Its activity is regulated as follows. Inhibited by (S)-benzylsuccinyl-CoA. Catalyzes the reversible conversion of (R)-2-benzylsuccinate to (R)-2-benzylsuccinyl-CoA. Inactive with (S)-benzylsuccinate. This is Succinyl-CoA:(R)-benzylsuccinate CoA-transferase subunit BbsE (bbsE) from Thauera aromatica.